The sequence spans 314 residues: L-lactate dehydrogenase (314 aa).

Residues Val-17, Asp-38, Lys-43, Tyr-69, and 83–84 (GA) each bind NAD(+). Substrate-binding residues include Gln-86 and Arg-92. NAD(+) contacts are provided by residues Ser-105, 122-124 (ASN), and Ser-147. Substrate is bound at residue 124–127 (NPVD). 152–155 (DSAR) provides a ligand contact to substrate. Arg-157 and His-172 together coordinate beta-D-fructose 1,6-bisphosphate. Catalysis depends on His-179, which acts as the Proton acceptor. Tyr-223 is subject to Phosphotyrosine. Position 232 (Thr-232) interacts with substrate.

This sequence belongs to the LDH/MDH superfamily. LDH family. In terms of assembly, homotetramer.

Its subcellular location is the cytoplasm. It carries out the reaction (S)-lactate + NAD(+) = pyruvate + NADH + H(+). The protein operates within fermentation; pyruvate fermentation to lactate; (S)-lactate from pyruvate: step 1/1. Allosterically activated by fructose 1,6-bisphosphate (FBP). Functionally, catalyzes the conversion of lactate to pyruvate. The protein is L-lactate dehydrogenase of Corynebacterium glutamicum (strain ATCC 13032 / DSM 20300 / JCM 1318 / BCRC 11384 / CCUG 27702 / LMG 3730 / NBRC 12168 / NCIMB 10025 / NRRL B-2784 / 534).